We begin with the raw amino-acid sequence, 470 residues long: Phosphoribosylamine--glycine ligase (470 aa).

Positions 115–354 (KDFLKRIGVP…MAEISMAVVE (240 aa)) constitute an ATP-grasp domain. 142-203 (REKFNNGIVV…EERLRGIEVA (62 aa)) serves as a coordination point for ATP. Mg(2+) contacts are provided by E324 and N326.

This sequence belongs to the GARS family. Requires Mg(2+) as cofactor. The cofactor is Mn(2+).

The catalysed reaction is 5-phospho-beta-D-ribosylamine + glycine + ATP = N(1)-(5-phospho-beta-D-ribosyl)glycinamide + ADP + phosphate + H(+). The protein operates within purine metabolism; IMP biosynthesis via de novo pathway; N(1)-(5-phospho-D-ribosyl)glycinamide from 5-phospho-alpha-D-ribose 1-diphosphate: step 2/2. This is Phosphoribosylamine--glycine ligase (purD) from Archaeoglobus fulgidus (strain ATCC 49558 / DSM 4304 / JCM 9628 / NBRC 100126 / VC-16).